The primary structure comprises 295 residues: GTP cyclohydrolase FolE2 (295 aa).

This sequence belongs to the GTP cyclohydrolase IV family.

It carries out the reaction GTP + H2O = 7,8-dihydroneopterin 3'-triphosphate + formate + H(+). It participates in cofactor biosynthesis; 7,8-dihydroneopterin triphosphate biosynthesis; 7,8-dihydroneopterin triphosphate from GTP: step 1/1. Functionally, converts GTP to 7,8-dihydroneopterin triphosphate. The sequence is that of GTP cyclohydrolase FolE2 from Pseudomonas putida (strain W619).